The primary structure comprises 281 residues: Probable endonuclease 4 (281 aa).

Residues His68, His108, Glu145, Asp179, His182, His216, Asp229, His231, and Glu261 each contribute to the Zn(2+) site.

It belongs to the AP endonuclease 2 family. Zn(2+) serves as cofactor.

The enzyme catalyses Endonucleolytic cleavage to 5'-phosphooligonucleotide end-products.. Functionally, endonuclease IV plays a role in DNA repair. It cleaves phosphodiester bonds at apurinic or apyrimidinic (AP) sites, generating a 3'-hydroxyl group and a 5'-terminal sugar phosphate. The polypeptide is Probable endonuclease 4 (Trichlorobacter lovleyi (strain ATCC BAA-1151 / DSM 17278 / SZ) (Geobacter lovleyi)).